A 24-amino-acid chain; its full sequence is Skin secreted peptide 1 (24 aa).

As to expression, expressed by the skin glands.

Its subcellular location is the secreted. This is Skin secreted peptide 1 from Ascaphus truei (Coastal tailed frog).